A 371-amino-acid chain; its full sequence is 43 kDa relaxation protein (371 aa).

Disordered regions lie at residues 1–46, 150–172, 196–221, 263–291, and 328–371; these read MASY…GNMP, KEPDAVAQKRHVSGKHRPNAKNT, RVDSRSLKAQGIDREPERHLGAGQVQ, SERDTLTLKQELKSEPEQESHSGRTFDFE, and IHQE…SFSR. Residues 22–42 are compositionally biased toward basic and acidic residues; the sequence is YIAREGKYAREKDSDLEHKES. Over residues 157 to 168 the composition is skewed to basic residues; it reads QKRHVSGKHRPN. The span at 196 to 215 shows a compositional bias: basic and acidic residues; the sequence is RVDSRSLKAQGIDREPERHL. A compositionally biased stretch (basic and acidic residues) spans 330–365; that stretch reads QEMERQRERERLAEKQRQQEKERQRLAEQIRQKPDK.

Belongs to the MobA/MobL family.

This protein is probably required for relaxation complex formation. This Salmonella typhimurium protein is 43 kDa relaxation protein.